The primary structure comprises 338 residues: Fructose-1,6-bisphosphatase class 1 (338 aa).

Mg(2+) is bound by residues Glu-91, Asp-113, Leu-115, and Asp-116. Residues 116 to 119, Asn-208, and Lys-274 contribute to the substrate site; that span reads DGSS. A Mg(2+)-binding site is contributed by Glu-280.

This sequence belongs to the FBPase class 1 family. Homotetramer. Mg(2+) serves as cofactor.

Its subcellular location is the cytoplasm. The enzyme catalyses beta-D-fructose 1,6-bisphosphate + H2O = beta-D-fructose 6-phosphate + phosphate. It participates in carbohydrate biosynthesis; gluconeogenesis. The chain is Fructose-1,6-bisphosphatase class 1 from Ralstonia pickettii (strain 12J).